A 735-amino-acid chain; its full sequence is Protein STRUBBELIG-RECEPTOR FAMILY 2 (735 aa).

The signal sequence occupies residues 1–23 (MKTKQQLRFLATILLTTILFVLA). Residues 24–297 (KTDTDPLEVL…KKKKKGIGAG (274 aa)) lie on the Extracellular side of the membrane. 8 LRR repeats span residues 78–94 (LRELKLLGSLGNQLQHL), 96–119 (NLKILDVSFNNLEGEIPFGLPPNA), 120–140 (THINMAYNNLTQSIPFSLPLM), 142–163 (SLQSLNLSHNSLSGPLGNVFSG), 165–187 (QIKEMDLSFNNLTGDLPSSFGTL), 189–211 (NLTSLYLQNNRLTGSVIYLADLP), 212–232 (LADLNIEDNQFSGIIPSHFQS), and 233–253 (IPHLWIWGNKFHVEPNYKPWK). Residues Asn-118, Asn-128, Asn-147, Asn-175, and Asn-189 are each glycosylated (N-linked (GlcNAc...) asparagine). N-linked (GlcNAc...) asparagine glycosylation occurs at Asn-264. A helical membrane pass occupies residues 298-318 (STFLLVGGLALLGTFFALFAV). Residues 319–735 (RMNHRRAQNL…SSPTFSYLSS (417 aa)) are Cytoplasmic-facing. Positions 358–378 (PQIKRFQPPPAPQLRHLPSPP) are disordered. In terms of domain architecture, Protein kinase spans 415–695 (FSEENLLGEG…EIVEALTALI (281 aa)).

This sequence belongs to the protein kinase superfamily. Ser/Thr protein kinase family. In terms of tissue distribution, expressed in seedlings, roots, stems, leaves, flowers and siliques.

The protein resides in the membrane. The protein is Protein STRUBBELIG-RECEPTOR FAMILY 2 (SRF2) of Arabidopsis thaliana (Mouse-ear cress).